We begin with the raw amino-acid sequence, 86 residues long: Large ribosomal subunit protein bL27 (86 aa).

The span at 1–10 (MAQKKGGGST) shows a compositional bias: gly residues. Residues 1–21 (MAQKKGGGSTRNGRDSESKRL) are disordered.

It belongs to the bacterial ribosomal protein bL27 family.

The protein is Large ribosomal subunit protein bL27 of Ralstonia nicotianae (strain ATCC BAA-1114 / GMI1000) (Ralstonia solanacearum).